A 453-amino-acid chain; its full sequence is GTPase Der (453 aa).

2 EngA-type G domains span residues 3–178 and 190–363; these read PKIA…PNNE and LKLA…LECS. GTP is bound by residues 9–16, 57–61, 130–133, 196–203, 243–247, and 308–311; these read GRPNVGKS, DTGGV, NKVD, GRPNAGKS, DTAGI, and NKTD. The 85-residue stretch at 364 to 448 folds into the KH-like domain; that stretch reads TRINTGVLNR…PIRIRLRSSH (85 aa).

The protein belongs to the TRAFAC class TrmE-Era-EngA-EngB-Septin-like GTPase superfamily. EngA (Der) GTPase family. As to quaternary structure, associates with the 50S ribosomal subunit.

Its function is as follows. GTPase that plays an essential role in the late steps of ribosome biogenesis. The protein is GTPase Der of Lawsonia intracellularis (strain PHE/MN1-00).